We begin with the raw amino-acid sequence, 137 residues long: Transcription antitermination protein NusB (137 aa).

The protein belongs to the NusB family.

Its function is as follows. Involved in transcription antitermination. Required for transcription of ribosomal RNA (rRNA) genes. Binds specifically to the boxA antiterminator sequence of the ribosomal RNA (rrn) operons. In Finegoldia magna (strain ATCC 29328 / DSM 20472 / WAL 2508) (Peptostreptococcus magnus), this protein is Transcription antitermination protein NusB.